A 286-amino-acid polypeptide reads, in one-letter code: 4-diphosphocytidyl-2-C-methyl-D-erythritol kinase (286 aa).

The active site involves Lys-13. ATP is bound at residue 99-109 (PMGGGLGGGSS). The active site involves Asp-141.

It belongs to the GHMP kinase family. IspE subfamily.

The enzyme catalyses 4-CDP-2-C-methyl-D-erythritol + ATP = 4-CDP-2-C-methyl-D-erythritol 2-phosphate + ADP + H(+). The protein operates within isoprenoid biosynthesis; isopentenyl diphosphate biosynthesis via DXP pathway; isopentenyl diphosphate from 1-deoxy-D-xylulose 5-phosphate: step 3/6. Its function is as follows. Catalyzes the phosphorylation of the position 2 hydroxy group of 4-diphosphocytidyl-2C-methyl-D-erythritol. In Herminiimonas arsenicoxydans, this protein is 4-diphosphocytidyl-2-C-methyl-D-erythritol kinase.